The following is a 437-amino-acid chain: Methylenetetrahydrofolate--tRNA-(uracil-5-)-methyltransferase TrmFO (437 aa).

Gly-10–Gly-15 contributes to the FAD binding site.

The protein belongs to the MnmG family. TrmFO subfamily. FAD is required as a cofactor.

Its subcellular location is the cytoplasm. The catalysed reaction is uridine(54) in tRNA + (6R)-5,10-methylene-5,6,7,8-tetrahydrofolate + NADH + H(+) = 5-methyluridine(54) in tRNA + (6S)-5,6,7,8-tetrahydrofolate + NAD(+). It carries out the reaction uridine(54) in tRNA + (6R)-5,10-methylene-5,6,7,8-tetrahydrofolate + NADPH + H(+) = 5-methyluridine(54) in tRNA + (6S)-5,6,7,8-tetrahydrofolate + NADP(+). Catalyzes the folate-dependent formation of 5-methyl-uridine at position 54 (M-5-U54) in all tRNAs. The polypeptide is Methylenetetrahydrofolate--tRNA-(uracil-5-)-methyltransferase TrmFO (Geotalea daltonii (strain DSM 22248 / JCM 15807 / FRC-32) (Geobacter daltonii)).